The sequence spans 494 residues: Glutamyl-tRNA(Gln) amidotransferase subunit A (494 aa).

Active-site charge relay system residues include K78 and S158. S182 acts as the Acyl-ester intermediate in catalysis.

The protein belongs to the amidase family. GatA subfamily. As to quaternary structure, heterotrimer of A, B and C subunits.

The catalysed reaction is L-glutamyl-tRNA(Gln) + L-glutamine + ATP + H2O = L-glutaminyl-tRNA(Gln) + L-glutamate + ADP + phosphate + H(+). Its function is as follows. Allows the formation of correctly charged Gln-tRNA(Gln) through the transamidation of misacylated Glu-tRNA(Gln) in organisms which lack glutaminyl-tRNA synthetase. The reaction takes place in the presence of glutamine and ATP through an activated gamma-phospho-Glu-tRNA(Gln). The chain is Glutamyl-tRNA(Gln) amidotransferase subunit A from Xanthobacter autotrophicus (strain ATCC BAA-1158 / Py2).